We begin with the raw amino-acid sequence, 676 residues long: Long-chain-fatty-acid--CoA ligase 1 (676 aa).

246–257 lines the ATP pocket; it reads YTSGSTGLPKGV. The short motif at 511–560 is the FACS element; it reads DGWFRTGDVGELTPEGLLRIIDRKKNLVKTQNGEYIALEKLESRYRTSSL.

It belongs to the ATP-dependent AMP-binding enzyme family. It depends on Mg(2+) as a cofactor.

It carries out the reaction a long-chain fatty acid + ATP + CoA = a long-chain fatty acyl-CoA + AMP + diphosphate. Its function is as follows. Esterification, concomitant with transport, of exogenous long-chain fatty acids into metabolically active CoA thioesters for subsequent degradation or incorporation into phospholipids. It may supplement intracellular myristoyl-CoA pools from exogenous myristate. Preferentially acts on C12:0-C16:0 fatty acids with myristic and pentadecanic acid (C15:0) having the highest activities. Appears to play a role in the maintenance of cell viability during stationary phase. The protein is Long-chain-fatty-acid--CoA ligase 1 (lcf1) of Schizosaccharomyces pombe (strain 972 / ATCC 24843) (Fission yeast).